The following is a 278-amino-acid chain: Prohibitin-7, mitochondrial (278 aa).

The Mitochondrial matrix portion of the chain corresponds to 1 to 14; the sequence is MNVKKVPNVPGSPA. Residues 15–37 traverse the membrane as a helical; Signal-anchor for type II membrane protein segment; the sequence is LSALLKLGVIGGLGLYCIGSSMY. The Mitochondrial intermembrane portion of the chain corresponds to 38–278; the sequence is NVDGGHRAIV…NSSDLLISKQ (241 aa). Residues 186-220 are a coiled coil; sequence KEFTEAIEKKQVAAQEAERAKFIVEKAEQDKKSAI.

Belongs to the prohibitin family. As to quaternary structure, component of a prohibitin multimeric complex in mitochondrial membranes.

It localises to the mitochondrion inner membrane. In terms of biological role, prohibitin probably acts as a holdase/unfoldase for the stabilization of newly synthesized mitochondrial proteins. This Arabidopsis thaliana (Mouse-ear cress) protein is Prohibitin-7, mitochondrial (PHB7).